A 291-amino-acid polypeptide reads, in one-letter code: Acetyl-coenzyme A carboxylase carboxyl transferase subunit beta (291 aa).

Residues 1–23 (MSWLSKLMPSGIRTDNTPSKKRS) form a disordered region. A CoA carboxyltransferase N-terminal domain is found at 28–291 (LWEKCSNCGS…LGRQPAPEVA (264 aa)). The Zn(2+) site is built by C32, C35, C51, and C54. The segment at 32-54 (CSNCGSALYRPELEENLEVCPKC) adopts a C4-type zinc-finger fold.

The protein belongs to the AccD/PCCB family. Acetyl-CoA carboxylase is a heterohexamer composed of biotin carboxyl carrier protein (AccB), biotin carboxylase (AccC) and two subunits each of ACCase subunit alpha (AccA) and ACCase subunit beta (AccD). It depends on Zn(2+) as a cofactor.

Its subcellular location is the cytoplasm. It carries out the reaction N(6)-carboxybiotinyl-L-lysyl-[protein] + acetyl-CoA = N(6)-biotinyl-L-lysyl-[protein] + malonyl-CoA. It participates in lipid metabolism; malonyl-CoA biosynthesis; malonyl-CoA from acetyl-CoA: step 1/1. Component of the acetyl coenzyme A carboxylase (ACC) complex. Biotin carboxylase (BC) catalyzes the carboxylation of biotin on its carrier protein (BCCP) and then the CO(2) group is transferred by the transcarboxylase to acetyl-CoA to form malonyl-CoA. The chain is Acetyl-coenzyme A carboxylase carboxyl transferase subunit beta from Stenotrophomonas maltophilia (strain K279a).